The chain runs to 82 residues: U17-hexatoxin-Hi1a (82 aa).

An N-terminal signal peptide occupies residues 1 to 21 (MKTIFAVTLLLFAIYVPECMP). 5 disulfides stabilise this stretch: Cys22/Cys33, Cys27/Cys48, Cys32/Cys61, Cys58/Cys69, and Cys63/Cys75.

Expressed by the venom gland.

The protein resides in the secreted. Probable ion channel inhibitor. This Hadronyche infensa (Fraser island funnel-web spider) protein is U17-hexatoxin-Hi1a.